Reading from the N-terminus, the 626-residue chain is Hemocyanin AA6 chain (626 aa).

The Cu cation site is built by histidine 170, histidine 174, histidine 201, histidine 321, histidine 325, and histidine 361. Serine 374 bears the Phosphoserine mark.

It belongs to the tyrosinase family. Hemocyanin subfamily. In terms of assembly, scorpion hemocyanin is a 24-chain polymer with 8 different chains identified, assembled in hexameric substructures. In terms of processing, three disulfide bonds are present. In terms of tissue distribution, hemolymph.

The protein resides in the secreted. Its subcellular location is the extracellular space. Functionally, hemocyanins are copper-containing oxygen carriers occurring freely dissolved in the hemolymph of many mollusks and arthropods. This chain is Hemocyanin AA6 chain, found in Androctonus australis (Sahara scorpion).